A 453-amino-acid polypeptide reads, in one-letter code: MPDYDTQTLRDWDRRHIWHPFTQMKEWEESEPVVIVEGEGSWIIDSEGKRYLDGVAAIWTNVHGHCRREINEALKAQVDRLEHSTLLGLTNDRAVVLAKRLAEIAPPGLCKVFYSDNGSTAVEVGVKMAFQFWRHEGKPEKSRFISFTSAYHGDTLGAVSVGGIDLFHGVFRPLLFPTIQAPAPYCYRCPMGRDTPAACGMECLTELERIMESHAGEVAGLVIEPLVQGAGGMIVQPEGFLKGVRELCDRHDILMIADEVAVGFGRTGAMFACGREGITPDIMALSKGITAGYMPLAATLATQQVYDAFLGEYREMKTFFHGHTFTGNPLGCAVALASLDLFESDRLLGKLPNKIKLLQEKLKGLIELEHVGDVRQCGMIAAVELVRDRATKEPFDWEERVGVRVCLEARTHGVFLRPLGNVIVIFPPLAITAEEIDFLVDGLEKSIHTVTGG.

Residue 118–119 (GS) participates in pyridoxal 5'-phosphate binding. Tyrosine 151 serves as a coordination point for substrate. Pyridoxal 5'-phosphate is bound at residue aspartate 258. Substrate is bound by residues lysine 287, glycine 322, and arginine 417. Lysine 287 is subject to N6-(pyridoxal phosphate)lysine.

This sequence belongs to the class-III pyridoxal-phosphate-dependent aminotransferase family. BioA subfamily. Homodimer. Pyridoxal 5'-phosphate is required as a cofactor.

It is found in the cytoplasm. The enzyme catalyses (8S)-8-amino-7-oxononanoate + S-adenosyl-L-methionine = S-adenosyl-4-methylsulfanyl-2-oxobutanoate + (7R,8S)-7,8-diammoniononanoate. The protein operates within cofactor biosynthesis; biotin biosynthesis; 7,8-diaminononanoate from 8-amino-7-oxononanoate (SAM route): step 1/1. In terms of biological role, catalyzes the transfer of the alpha-amino group from S-adenosyl-L-methionine (SAM) to 7-keto-8-aminopelargonic acid (KAPA) to form 7,8-diaminopelargonic acid (DAPA). It is the only aminotransferase known to utilize SAM as an amino donor. In Geobacter sulfurreducens (strain ATCC 51573 / DSM 12127 / PCA), this protein is Adenosylmethionine-8-amino-7-oxononanoate aminotransferase.